The sequence spans 119 residues: Large ribosomal subunit protein uL22 (119 aa).

It belongs to the universal ribosomal protein uL22 family. In terms of assembly, part of the 50S ribosomal subunit.

In terms of biological role, this protein binds specifically to 23S rRNA; its binding is stimulated by other ribosomal proteins, e.g. L4, L17, and L20. It is important during the early stages of 50S assembly. It makes multiple contacts with different domains of the 23S rRNA in the assembled 50S subunit and ribosome. Its function is as follows. The globular domain of the protein is located near the polypeptide exit tunnel on the outside of the subunit, while an extended beta-hairpin is found that lines the wall of the exit tunnel in the center of the 70S ribosome. The chain is Large ribosomal subunit protein uL22 from Rhodopirellula baltica (strain DSM 10527 / NCIMB 13988 / SH1).